We begin with the raw amino-acid sequence, 324 residues long: MPKPSIRGSELPQRQSPRLRTSLLSTSSDPHHLSRPITDRSPKLGLDRRSPRSGGPHTDPLSQKKLGSRISGLESQLGQAQEELRLLKQQLAKAEAAKKRAQEELHRKKSKKPNTPAPERDDIPGDGHQETDVFEVLDEKAKESEKTKNDELASKEDQINVLKARLYDLEKERVSLSEENETLKDQLKKTDTEMSCAKAKEDEIASKVSQIGEELEESNETTAKLKKKLESVEEAKETLEAEMKKLKVQTEQWRKAADAAAAVLSGGVEMNGRFSEQCGSMEKHFAGRFVGSPGMADDSDDGSGKRKSSGKKMFGDLWKKKGQK.

4 disordered regions span residues 1–74, 91–156, 175–201, and 289–324; these read MPKP…SGLE, LAKA…ASKE, SLSEENETLKDQLKKTDTEMSCAKAKE, and FVGSPGMADDSDDGSGKRKSSGKKMFGDLWKKKGQK. A compositionally biased stretch (low complexity) spans 13–28; the sequence is QRQSPRLRTSLLSTSS. Composition is skewed to basic and acidic residues over residues 29-50, 95-106, and 118-156; these read DPHHLSRPITDRSPKLGLDRRS, EAAKKRAQEELH, and PERDDIPGDGHQETDVFEVLDEKAKESEKTKNDELASKE. Positions 62 to 266 form a coiled coil; the sequence is SQKKLGSRIS…ADAAAAVLSG (205 aa). The segment covering 313 to 324 has biased composition (basic and acidic residues); sequence MFGDLWKKKGQK.

The protein belongs to the ICR family. Interacts with ARAC11 in vitro.

Acts as a scaffold, mediating interaction of ROPs with different proteins. The polypeptide is Interactor of constitutive active ROPs 4 (ICR4) (Arabidopsis thaliana (Mouse-ear cress)).